The sequence spans 466 residues: Soluble pyridine nucleotide transhydrogenase (466 aa).

36–45 (EKESSVGGGC) is an FAD binding site.

The protein belongs to the class-I pyridine nucleotide-disulfide oxidoreductase family. FAD is required as a cofactor.

Its subcellular location is the cytoplasm. It catalyses the reaction NAD(+) + NADPH = NADH + NADP(+). Conversion of NADPH, generated by peripheral catabolic pathways, to NADH, which can enter the respiratory chain for energy generation. The chain is Soluble pyridine nucleotide transhydrogenase from Vibrio vulnificus (strain CMCP6).